Here is a 233-residue protein sequence, read N- to C-terminus: Glucosamine-6-phosphate deaminase (233 aa).

Residue D62 is the Proton acceptor; for enolization step of the active site. The active-site For ring-opening step is N128. The active-site Proton acceptor; for ring-opening step is the H130. E135 serves as the catalytic For ring-opening step.

The protein belongs to the glucosamine/galactosamine-6-phosphate isomerase family. NagB subfamily.

It catalyses the reaction alpha-D-glucosamine 6-phosphate + H2O = beta-D-fructose 6-phosphate + NH4(+). The protein operates within amino-sugar metabolism; N-acetylneuraminate degradation; D-fructose 6-phosphate from N-acetylneuraminate: step 5/5. Catalyzes the reversible isomerization-deamination of glucosamine 6-phosphate (GlcN6P) to form fructose 6-phosphate (Fru6P) and ammonium ion. The polypeptide is Glucosamine-6-phosphate deaminase (Streptococcus pneumoniae serotype 4 (strain ATCC BAA-334 / TIGR4)).